Here is a 72-residue protein sequence, read N- to C-terminus: Large ribosomal subunit protein bL31 (72 aa).

This sequence belongs to the bacterial ribosomal protein bL31 family. Type A subfamily. Part of the 50S ribosomal subunit.

In terms of biological role, binds the 23S rRNA. The polypeptide is Large ribosomal subunit protein bL31 (Deinococcus deserti (strain DSM 17065 / CIP 109153 / LMG 22923 / VCD115)).